The primary structure comprises 101 residues: Small ribosomal subunit protein bS18c (101 aa).

The protein belongs to the bacterial ribosomal protein bS18 family. In terms of assembly, part of the 30S ribosomal subunit.

The protein resides in the plastid. The protein localises to the chloroplast. The protein is Small ribosomal subunit protein bS18c of Lepidium virginicum (Virginia pepperweed).